The following is a 60-amino-acid chain: Large ribosomal subunit protein bL32 (60 aa).

The disordered stretch occupies residues 1–23 (MAVPRNRHSNARKNIRRSHHAKQ).

This sequence belongs to the bacterial ribosomal protein bL32 family.

This Chlamydia abortus (strain DSM 27085 / S26/3) (Chlamydophila abortus) protein is Large ribosomal subunit protein bL32.